We begin with the raw amino-acid sequence, 461 residues long: Nuclear distribution protein PAC1 (461 aa).

The region spanning 9–41 is the LisH domain; sequence QAEELHKSIIAYLTANNLLDTANTLRAELNLNE. The stretch at 61 to 88 forms a coiled coil; that stretch reads TSVVRLQKKIMDLESRMSAMQAELDNAT. WD repeat units lie at residues 114–155, 157–197, 201–248, 251–290, 312–355, 357–396, 401–446, and 448–461; these read SHRD…RTIK, HTRA…KNIR, GHDH…CLRT, GHTA…PETK, QYLS…LLTL, GHDN…KCIK, AHER…IRCV, and ATGG…IFAN.

The protein belongs to the WD repeat LIS1/nudF family. Self-associates. Interacts with NDL1 and dynein.

The protein localises to the cytoplasm. It localises to the cytoskeleton. It is found in the spindle pole. Functionally, positively regulates the activity of the minus-end directed microtubule motor protein dynein. May enhance dynein-mediated microtubule sliding by targeting dynein to the microtubule plus end. Required for nuclear migration during vegetative growth as well as development. Required for retrograde early endosome (EE) transport from the hyphal tip. Required for localization of dynein to the mitotic spindle poles. Recruits additional proteins to the dynein complex at SPBs. This is Nuclear distribution protein PAC1 from Arthroderma benhamiae (strain ATCC MYA-4681 / CBS 112371) (Trichophyton mentagrophytes).